The primary structure comprises 160 residues: Lipoprotein signal peptidase (160 aa).

Transmembrane regions (helical) follow at residues 13–33 (IYIT…RLII), 72–92 (WFLS…ITKL), and 104–124 (SLII…GFVV). Active-site residues include aspartate 125 and aspartate 143. A helical transmembrane segment spans residues 134-154 (WHFATFNIADCSIFIGIIILM).

Belongs to the peptidase A8 family.

It localises to the cell inner membrane. The catalysed reaction is Release of signal peptides from bacterial membrane prolipoproteins. Hydrolyzes -Xaa-Yaa-Zaa-|-(S,diacylglyceryl)Cys-, in which Xaa is hydrophobic (preferably Leu), and Yaa (Ala or Ser) and Zaa (Gly or Ala) have small, neutral side chains.. Its pathway is protein modification; lipoprotein biosynthesis (signal peptide cleavage). Its function is as follows. This protein specifically catalyzes the removal of signal peptides from prolipoproteins. The protein is Lipoprotein signal peptidase of Buchnera aphidicola subsp. Acyrthosiphon pisum (strain 5A).